Here is a 303-residue protein sequence, read N- to C-terminus: Acetylglutamate kinase (303 aa).

Substrate contacts are provided by residues 76–77 (GG), Arg-98, and Asn-192.

This sequence belongs to the acetylglutamate kinase family. ArgB subfamily.

It localises to the cytoplasm. The catalysed reaction is N-acetyl-L-glutamate + ATP = N-acetyl-L-glutamyl 5-phosphate + ADP. It functions in the pathway amino-acid biosynthesis; L-arginine biosynthesis; N(2)-acetyl-L-ornithine from L-glutamate: step 2/4. In terms of biological role, catalyzes the ATP-dependent phosphorylation of N-acetyl-L-glutamate. The sequence is that of Acetylglutamate kinase from Chlorobium phaeobacteroides (strain DSM 266 / SMG 266 / 2430).